The sequence spans 190 residues: Protein LZIC (190 aa).

A coiled-coil region spans residues 6-64 (TTETSKLKQNLEEQLDRLMQQLQDLEECREELDADEYEETKKETLEQLSEINDSLKKIM).

It belongs to the CTNNBIP1 family. Does not interact with CTNNB1.

The sequence is that of Protein LZIC (LZIC) from Gallus gallus (Chicken).